The following is a 2517-amino-acid chain: Protein capicua homolog (2517 aa).

Disordered stretches follow at residues 1-197, 300-325, 342-483, 531-579, 608-640, and 658-767; these read MKPM…SGSY, LSPGPSSQPGLPGSLPQPPQPLHREP, PWEP…KYKK, EMEG…RGDS, SSRSGTPSFSPVSTQSPFSPAPSPSPSPLFGFR, and VRSR…FRAV. Positions 57–67 are enriched in acidic residues; sequence EEAEEGEEEEA. Basic and acidic residues predominate over residues 91–101; it reads EDPKGDGEAGR. 2 stretches are compositionally biased toward low complexity: residues 158–167 and 300–313; these read TSTRSSSTDT and LSPGPSSQPGLPGS. Positions 396–405 are enriched in basic and acidic residues; sequence HCEEGEEKHP. The segment covering 414–428 has biased composition (pro residues); the sequence is LPLPPPQLLSPPPKS. A compositionally biased stretch (low complexity) spans 451-477; that stretch reads GSRSSSVASLEKGTAPAARARTPLTAA. Polar residues predominate over residues 608 to 619; sequence SSRSGTPSFSPV. Over residues 677 to 686 the composition is skewed to pro residues; that stretch reads DLGPHPPPPA. Residues 698-707 show a composition bias toward polar residues; the sequence is TFQTNLTFTV. The span at 726-735 shows a compositional bias: gly residues; the sequence is GAPGAGGGGA. Phosphoserine is present on residues serine 776 and serine 780. 7 disordered regions span residues 812–842, 955–1110, 1179–1220, 1235–1274, 1290–1347, 1379–1539, and 1595–1628; these read IVRNPDVPLPSKFPGEVGTAGEVRAGGPGRG, PSQP…DHIR, CNKD…APGV, SDTKAPGSSSCGAERLHTVGGPGSARPRAFSHSGVHSLDG, SGPA…TSDE, RVTD…ILQT, and IASKPFPTSGRAEASPNDTAGARTEMGTGSRVPG. Residues 937 to 955 form an interaction with ATXN1 region; sequence EPRSVAVFPWHSLVPFLAP. Polar residues predominate over residues 959 to 981; that stretch reads DPSVQPSEAQQPASHPVASNQSK. Residues serine 1055 and serine 1082 each carry the phosphoserine modification. Composition is skewed to basic and acidic residues over residues 1087 to 1110, 1179 to 1188, and 1200 to 1209; these read PKERDSSSEKDGRSPNKREKDHIR, CNKDRKKSSS, and GHKETRERSM. At arginine 1099 the chain carries Omega-N-methylarginine. The HMG box DNA-binding region spans 1109 to 1177; that stretch reads IRRPMNAFMI…AHFKAHPDWK (69 aa). At serine 1186 the chain carries Phosphoserine. Over residues 1235-1245 the composition is skewed to polar residues; it reads SDTKAPGSSSC. At serine 1271 the chain carries Phosphoserine. Positions 1305-1323 are enriched in low complexity; it reads GAPGPFAAPGEGGALAATG. Phosphoserine occurs at positions 1340, 1345, and 1405. A compositionally biased stretch (pro residues) spans 1418-1430; it reads PLDPEPPGPPDPP. Residues 1439–1456 show a composition bias toward low complexity; the sequence is SAPSSSASSPASSSASAA. Polar residues predominate over residues 1457–1474; sequence TSFSLGSGTFKAQESGQG. Phosphoserine is present on residues serine 1609, serine 1630, and serine 1648. An Asymmetric dimethylarginine modification is found at arginine 1772. The tract at residues 1799–1818 is disordered; that stretch reads QSVPSAPPPKAQSVSPVQAP. Residue arginine 1843 is modified to Omega-N-methylarginine. 3 disordered regions span residues 2039–2064, 2100–2342, and 2430–2517; these read AATILPKGPPAPATATPAPTSPFPSA, SFEA…AKCE, and AATP…ATGR. Low complexity predominate over residues 2051–2064; sequence ATATPAPTSPFPSA. Pro residues-rich tracts occupy residues 2110-2119 and 2136-2145; these read GPAPRQPLEP and PTPPAPPPLP. The segment covering 2146–2155 has biased composition (low complexity); that stretch reads ETWTPTARSS. Lysine 2177 bears the N6-acetyllysine mark. The segment covering 2198–2209 has biased composition (pro residues); sequence PPTPPSPAPAPA. Threonine 2200 carries the phosphothreonine modification. Serine 2203 carries the post-translational modification Phosphoserine. Positions 2210-2225 are enriched in low complexity; sequence VAPGGSSESSSGRAAG. A compositionally biased stretch (basic and acidic residues) spans 2249 to 2278; it reads KTFDSVDNRVLSEVDFEERFAELPEFRPEE. Phosphoserine is present on residues serine 2260, serine 2282, serine 2287, serine 2291, serine 2298, and serine 2306. Residue threonine 2307 is modified to Phosphothreonine. Phosphoserine is present on residues serine 2311 and serine 2318. The span at 2457–2469 shows a compositional bias: pro residues; the sequence is APTPSPAGGPDPT. Serine 2504 carries the post-translational modification Phosphoserine.

In terms of assembly, found in a complex with ATXN1 and ATXN1L. As to quaternary structure, interacts with ATXN1. As to expression, expressed in fetal brain.

The protein localises to the nucleus. Functionally, transcriptional repressor which plays a role in development of the central nervous system (CNS). In concert with ATXN1 and ATXN1L, involved in brain development. The sequence is that of Protein capicua homolog (CIC) from Homo sapiens (Human).